The chain runs to 387 residues: Chorismate synthase (387 aa).

2 residues coordinate NADP(+): R39 and R45. The segment at 92 to 113 (PVEEGSEEKRRVSRPRPGHADL) is disordered. Residues 130–132 (RSS), 250–251 (QA), G295, 310–314 (KPIPT), and R336 contribute to the FMN site.

It belongs to the chorismate synthase family. In terms of assembly, homotetramer. The cofactor is FMNH2.

The enzyme catalyses 5-O-(1-carboxyvinyl)-3-phosphoshikimate = chorismate + phosphate. It functions in the pathway metabolic intermediate biosynthesis; chorismate biosynthesis; chorismate from D-erythrose 4-phosphate and phosphoenolpyruvate: step 7/7. In terms of biological role, catalyzes the anti-1,4-elimination of the C-3 phosphate and the C-6 proR hydrogen from 5-enolpyruvylshikimate-3-phosphate (EPSP) to yield chorismate, which is the branch point compound that serves as the starting substrate for the three terminal pathways of aromatic amino acid biosynthesis. This reaction introduces a second double bond into the aromatic ring system. This Brevibacillus brevis (strain 47 / JCM 6285 / NBRC 100599) protein is Chorismate synthase.